The chain runs to 394 residues: 1-deoxy-D-xylulose 5-phosphate reductoisomerase (394 aa).

NADPH contacts are provided by threonine 13, glycine 14, threonine 15, isoleucine 16, and asparagine 125. Position 126 (lysine 126) interacts with 1-deoxy-D-xylulose 5-phosphate. Residue glutamate 127 coordinates NADPH. Position 151 (aspartate 151) interacts with Mn(2+). 1-deoxy-D-xylulose 5-phosphate contacts are provided by serine 152, glutamate 153, serine 182, and histidine 205. Glutamate 153 is a Mn(2+) binding site. Glycine 211 is an NADPH binding site. Residues serine 218, asparagine 223, lysine 224, and glutamate 227 each coordinate 1-deoxy-D-xylulose 5-phosphate. Residue glutamate 227 participates in Mn(2+) binding.

The protein belongs to the DXR family. Mg(2+) is required as a cofactor. Requires Mn(2+) as cofactor.

The catalysed reaction is 2-C-methyl-D-erythritol 4-phosphate + NADP(+) = 1-deoxy-D-xylulose 5-phosphate + NADPH + H(+). The protein operates within isoprenoid biosynthesis; isopentenyl diphosphate biosynthesis via DXP pathway; isopentenyl diphosphate from 1-deoxy-D-xylulose 5-phosphate: step 1/6. Catalyzes the NADPH-dependent rearrangement and reduction of 1-deoxy-D-xylulose-5-phosphate (DXP) to 2-C-methyl-D-erythritol 4-phosphate (MEP). The sequence is that of 1-deoxy-D-xylulose 5-phosphate reductoisomerase from Methylobacillus flagellatus (strain ATCC 51484 / DSM 6875 / VKM B-1610 / KT).